The following is a 214-amino-acid chain: Rac-like GTP-binding protein 2 (214 aa).

14-21 (GDGAVGKT) is a binding site for GTP. The Effector region signature appears at 36–44 (YIPTVFDNF). Residues 61–65 (DTAGQ) and 119–122 (TKLD) contribute to the GTP site.

The protein belongs to the small GTPase superfamily. Rho family. May be palmitoylated.

The protein localises to the cytoplasm. The protein resides in the membrane. Inactive GDP-bound Rho GTPases reside in the cytosol, are found in a complex with Rho GDP-dissociation inhibitors (Rho GDIs), and are released from the GDI protein in order to translocate to membranes upon activation. This chain is Rac-like GTP-binding protein 2 (RAC2), found in Oryza sativa subsp. japonica (Rice).